A 109-amino-acid polypeptide reads, in one-letter code: Small ribosomal subunit protein bS6 (109 aa).

This sequence belongs to the bacterial ribosomal protein bS6 family.

Functionally, binds together with bS18 to 16S ribosomal RNA. The protein is Small ribosomal subunit protein bS6 of Anaplasma marginale (strain St. Maries).